Reading from the N-terminus, the 535-residue chain is Nuclear/nucleolar GTPase 2 (535 aa).

The tract at residues 1–42 (MAKKKERAVNVSGKPRHSLDVNRANDKKGAGGGAGGGGGGRS) is disordered. The segment covering 17–29 (HSLDVNRANDKKG) has biased composition (basic and acidic residues). Residues 30–41 (AGGGAGGGGGGR) show a composition bias toward gly residues. One can recognise a CP-type G domain in the interval 213–374 (WGELYKVIDS…LIDCPGVVYQ (162 aa)). Residues 261–264 (NKCD) form a G4 region. The G5 stretch occupies residues 290 to 292 (SIN). The G1 stretch occupies residues 323 to 330 (GYPNVGKS). Positions 349-353 (GETKV) are G2. A G3 region spans residues 367 to 370 (DCPG). A disordered region spans residues 464-495 (FFVPPPQQGEDSPSETAEPVDKSDEEGVSSDR).

The protein belongs to the TRAFAC class YlqF/YawG GTPase family. RsgA subfamily.

It localises to the nucleus. Its subcellular location is the nucleolus. Its function is as follows. GTPase involved in pre-60S ribosomal subunit maturation. This Oryza sativa subsp. indica (Rice) protein is Nuclear/nucleolar GTPase 2.